The primary structure comprises 116 residues: Ribonuclease P protein component (116 aa).

The protein belongs to the RnpA family. As to quaternary structure, consists of a catalytic RNA component (M1 or rnpB) and a protein subunit.

The enzyme catalyses Endonucleolytic cleavage of RNA, removing 5'-extranucleotides from tRNA precursor.. In terms of biological role, RNaseP catalyzes the removal of the 5'-leader sequence from pre-tRNA to produce the mature 5'-terminus. It can also cleave other RNA substrates such as 4.5S RNA. The protein component plays an auxiliary but essential role in vivo by binding to the 5'-leader sequence and broadening the substrate specificity of the ribozyme. This chain is Ribonuclease P protein component, found in Geobacter sp. (strain M21).